The primary structure comprises 596 residues: Elongation factor 4 (596 aa).

One can recognise a tr-type G domain in the interval 2-184 (KHIRNFSIIA…VIVDQIPPPE (183 aa)). GTP contacts are provided by residues 14 to 19 (DHGKST) and 131 to 134 (NKID).

The protein belongs to the TRAFAC class translation factor GTPase superfamily. Classic translation factor GTPase family. LepA subfamily.

It is found in the cell inner membrane. It carries out the reaction GTP + H2O = GDP + phosphate + H(+). Functionally, required for accurate and efficient protein synthesis under certain stress conditions. May act as a fidelity factor of the translation reaction, by catalyzing a one-codon backward translocation of tRNAs on improperly translocated ribosomes. Back-translocation proceeds from a post-translocation (POST) complex to a pre-translocation (PRE) complex, thus giving elongation factor G a second chance to translocate the tRNAs correctly. Binds to ribosomes in a GTP-dependent manner. The polypeptide is Elongation factor 4 (Shewanella sp. (strain ANA-3)).